The sequence spans 507 residues: MFARIVSRRAATGLFAGASSQCKMADRQVHTPLAKVQRHKYTNNENILVDHVEKVDPEVFDIMKNEKKRQRRGLELIASENFTSKAVMDALGSAMCNKYSEGYPGARYYGGNEFIDQMELLCQKRALEVFGLDPAKWGVNVQPLSGSPANFAVYTAIVGSNGRIMGLDLPDGGHLTHGFFTPARKVSATSEFFQSLPYKVDPTTGLIDYDKLEQNAMLFRPKAIIAGVSCYARHLDYERFRKIATKAGAYLMSDMAHISGLVAAGLIPSPFEYSDVVTTTTHKSLRGPRGALIFYRKGVRSTNAKGVDTLYDLEEKINSAVFPGLQGGPHNHTIAGIAVALRQCLSEDFVQYGEQVLKNAKTLAERMKKHGYALATGGTDNHLLLVDLRPIGVEGARAEHVLDLAHIACNKNTCPGDVSALRPGGIRLGTPALTSRGFQEQDFEKVGDFIHEGVQIAKKYNAEAGKTLKDFKSFTETNEPFKKDVADLAKRVEEFSTKFEIPGNETF.

Lys-283 carries the N6-(pyridoxal phosphate)lysine modification.

Belongs to the SHMT family. In terms of assembly, homotetramer. The cofactor is pyridoxal 5'-phosphate.

The enzyme catalyses (6R)-5,10-methylene-5,6,7,8-tetrahydrofolate + glycine + H2O = (6S)-5,6,7,8-tetrahydrofolate + L-serine. Its pathway is one-carbon metabolism; tetrahydrofolate interconversion. In terms of biological role, interconversion of serine and glycine. This is Serine hydroxymethyltransferase (mel-32) from Caenorhabditis elegans.